The sequence spans 900 residues: Formin-like protein 5 (900 aa).

Residues 15–32 (SRLVFWLILFSGLLVITL) form a helical; Signal-anchor membrane-spanning segment. The segment at 136–209 (RNLATKPGSS…PVSPAKKKED (74 aa)) is disordered. A compositionally biased stretch (pro residues) spans 160 to 173 (PPRPPTRPKSPPPR). Residues 214 to 234 (IIIAVVVTAVSTFLLAALFFL) form a helical membrane-spanning segment. Disordered stretches follow at residues 273-440 (SVKG…DAPK) and 849-900 (ARGR…SDSD). Polar residues predominate over residues 281–304 (HQSFNIYSNQGKMSSFDGSNSDTS). Over residues 307–316 (LEERLSHEGL) the composition is skewed to basic and acidic residues. Over residues 359–368 (FLKVSSKKAS) the composition is skewed to low complexity. The span at 369-429 (APPPPVPAPQ…GPKAPRPPSG (61 aa)) shows a compositional bias: pro residues. Residues 433 to 865 (ALDDDAPKTK…MARKQGSTAS (433 aa)) enclose the FH2 domain. Polar residues predominate over residues 860–876 (QGSTASASSETPRQTPS).

The protein belongs to the formin-like family. Class-I subfamily. In terms of tissue distribution, expressed in the endosperm. Localizes to the cell plate, a plant-specific membranous component that is assembled at the plane of cell division.

It is found in the membrane. Might be involved in the organization and polarity of the actin cytoskeleton. Interacts with the barbed end of actin filaments and nucleates actin-filament polymerization in vitro. Seems to play a role in cytokinesis. The protein is Formin-like protein 5 (FH5) of Arabidopsis thaliana (Mouse-ear cress).